Consider the following 637-residue polypeptide: Probable potassium transport system protein Kup (637 aa).

12 consecutive transmembrane segments (helical) span residues 24 to 44, 64 to 84, 113 to 133, 151 to 171, 182 to 202, 225 to 245, 261 to 281, 290 to 310, 351 to 371, 381 to 401, 409 to 429, and 433 to 453; these read LAIAAIGVVFGDIGTSPLYAL, VISLLFWAIILVVGIKYLLFV, AGALMALGIFGACMFYGDAVI, PHLSHLVLPITIVILIALFWI, LFGPIMVVWFIVIAALGVYHI, LLQAYVVLGSVVLVLTGAEAL, AYGLVMPSLVLNYFGQGALLI, PFFLLAPEWGLLPLVVLSTVA, IYVPVVNWLLLFVILCIVIGF, YGIAVTATMVITTVLACVVMV, LLVGAIIAVFLAIDLGFFGAN, and VAQGGWLPLGIGALLFFLLMT.

The protein belongs to the HAK/KUP transporter (TC 2.A.72) family.

It is found in the cell inner membrane. It carries out the reaction K(+)(in) + H(+)(in) = K(+)(out) + H(+)(out). Functionally, transport of potassium into the cell. Likely operates as a K(+):H(+) symporter. This Burkholderia ambifaria (strain ATCC BAA-244 / DSM 16087 / CCUG 44356 / LMG 19182 / AMMD) (Burkholderia cepacia (strain AMMD)) protein is Probable potassium transport system protein Kup.